The primary structure comprises 39 residues: Cytochrome b559 subunit beta (39 aa).

A helical membrane pass occupies residues 14 to 30 (WLTVHGLAVPTVSFLGS). A heme-binding site is contributed by H18.

Belongs to the PsbE/PsbF family. In terms of assembly, heterodimer of an alpha subunit and a beta subunit. PSII is composed of 1 copy each of membrane proteins PsbA, PsbB, PsbC, PsbD, PsbE, PsbF, PsbH, PsbI, PsbJ, PsbK, PsbL, PsbM, PsbT, PsbX, PsbY, PsbZ, Psb30/Ycf12, at least 3 peripheral proteins of the oxygen-evolving complex and a large number of cofactors. It forms dimeric complexes. Requires heme b as cofactor.

The protein localises to the plastid. The protein resides in the chloroplast thylakoid membrane. In terms of biological role, this b-type cytochrome is tightly associated with the reaction center of photosystem II (PSII). PSII is a light-driven water:plastoquinone oxidoreductase that uses light energy to abstract electrons from H(2)O, generating O(2) and a proton gradient subsequently used for ATP formation. It consists of a core antenna complex that captures photons, and an electron transfer chain that converts photonic excitation into a charge separation. The chain is Cytochrome b559 subunit beta from Lactuca sativa (Garden lettuce).